We begin with the raw amino-acid sequence, 107 residues long: V-type proton ATPase subunit G (107 aa).

It belongs to the V-ATPase G subunit family. As to quaternary structure, V-ATPase is a heteromultimeric enzyme composed of a peripheral catalytic V1 complex (components A to H) attached to an integral membrane V0 proton pore complex (components: a, c, c', c'' and d).

In terms of biological role, catalytic subunit of the peripheral V1 complex of vacuolar ATPase (V-ATPase). V-ATPase is responsible for acidifying a variety of intracellular compartments in eukaryotic cells. The polypeptide is V-type proton ATPase subunit G (atp6v1g) (Dictyostelium discoideum (Social amoeba)).